The chain runs to 248 residues: Transcription factor bHLH35 (248 aa).

Residues 37–54 show a composition bias toward low complexity; it reads SGSYDSSSPDGAASSPAS. Residues 37-60 are disordered; sequence SGSYDSSSPDGAASSPASKNIVSE. The region spanning 51-100 is the bHLH domain; sequence SPASKNIVSERNRRQKLNQRLFALRSVVPNITKMDKASIIKDAISYIEGL.

Homodimer. In terms of tissue distribution, expressed constitutively in roots, leaves, stems, and flowers.

The protein localises to the nucleus. The protein is Transcription factor bHLH35 (BHLH35) of Arabidopsis thaliana (Mouse-ear cress).